Here is a 252-residue protein sequence, read N- to C-terminus: Major prion protein (252 aa).

The signal sequence occupies residues 1–28 (MAHLGYWMLLLFVATWSDVGLCKKRPKP). Positions 23–229 (KKRPKPGGGW…ESQAAYQRAA (207 aa)) are interaction with GRB2, ERI3 and SYN1. The interval 26-109 (PKPGGGWNTG…KPSKPKTSMK (84 aa)) is disordered. Repeat copies occupy residues 51 to 59 (PPQGGGWGQ), 60 to 67 (PHGGGWGQ), 68 to 75 (PHGGGWGQ), 76 to 83 (PHGGGWGQ), and 84 to 92 (PHGGGWGQG). The 5 X 8 AA tandem repeats of P-H-G-G-G-W-G-Q stretch occupies residues 51–92 (PPQGGGWGQPHGGGWGQPHGGGWGQPHGGGWGQPHGGGWGQG). The span at 53–93 (QGGGWGQPHGGGWGQPHGGGWGQPHGGGWGQPHGGGWGQGG) shows a compositional bias: gly residues. Residues His-61, Gly-62, Gly-63, His-69, Gly-70, Gly-71, His-77, Gly-78, Gly-79, His-85, Gly-86, and Gly-87 each contribute to the Cu(2+) site. Cys-178 and Cys-213 are joined by a disulfide. Residues Asn-180 and Asn-196 are each glycosylated (N-linked (GlcNAc...) asparagine). A lipid anchor (GPI-anchor amidated alanine) is attached at Ala-229. Residues 230–252 (GVLLFSSPPVILLISFLIFLIVG) constitute a propeptide, removed in mature form.

It belongs to the prion family. As to quaternary structure, monomer and homodimer. Has a tendency to aggregate into amyloid fibrils containing a cross-beta spine, formed by a steric zipper of superposed beta-strands. Soluble oligomers may represent an intermediate stage on the path to fibril formation. Copper binding may promote oligomerization. Interacts with GRB2, APP, ERI3/PRNPIP and SYN1. Mislocalized cytosolically exposed PrP interacts with MGRN1; this interaction alters MGRN1 subcellular location and causes lysosomal enlargement. Interacts with KIAA1191.

It is found in the cell membrane. Its subcellular location is the golgi apparatus. Functionally, its primary physiological function is unclear. Has cytoprotective activity against internal or environmental stresses. May play a role in neuronal development and synaptic plasticity. May be required for neuronal myelin sheath maintenance. May play a role in iron uptake and iron homeostasis. Soluble oligomers are toxic to cultured neuroblastoma cells and induce apoptosis (in vitro). Association with GPC1 (via its heparan sulfate chains) targets PRNP to lipid rafts. Also provides Cu(2+) or Zn(2+) for the ascorbate-mediated GPC1 deaminase degradation of its heparan sulfate side chains. This chain is Major prion protein (PRNP), found in Oryctolagus cuniculus (Rabbit).